Consider the following 525-residue polypeptide: GMP synthase [glutamine-hydrolyzing] (525 aa).

Residues 9 to 207 enclose the Glutamine amidotransferase type-1 domain; sequence RILILDFGSQ…VRDICQCEAL (199 aa). The active-site Nucleophile is the Cys86. Active-site residues include His181 and Glu183. The GMPS ATP-PPase domain maps to 208–400; sequence WTPAKIIDDA…LGLPYDMLYR (193 aa). Residue 235 to 241 participates in ATP binding; the sequence is SGGVDSS.

In terms of assembly, homodimer.

The enzyme catalyses XMP + L-glutamine + ATP + H2O = GMP + L-glutamate + AMP + diphosphate + 2 H(+). Its pathway is purine metabolism; GMP biosynthesis; GMP from XMP (L-Gln route): step 1/1. Functionally, catalyzes the synthesis of GMP from XMP. This chain is GMP synthase [glutamine-hydrolyzing], found in Citrobacter koseri (strain ATCC BAA-895 / CDC 4225-83 / SGSC4696).